The sequence spans 985 residues: MAFRGPDPYLPASLLSQRLKAGEKTLDLEFEILSVGFNEEGRYALRLSAENPLQAGSSAGVQLQVNDGDPLPACSAVTEVIEQQDPGQSLTFTRNKFIFTLPKGFCKNDGQSDAHLRVEALRLDGSSGQEAQRVGEAIFPIYPRPDEPRMNLTAQDHEDLYRYCGNLALLRASEDPTARHCGGLAYSVAFHVHRDPRSSVSDCQLEPSQPELQTSREALSDKIEESYMSPFSTDSDQEGLSWEAGPWQHPAQVPEEPQGRLDTSQDPYPAANYLAPCNKETITVTLYGATNLPAGKDGSEPWPYVVVKTTSEKANKHSPQAMTSVTSEPTRAPVWGDTVNVEIQAEDTGREDLILKVMDNKRKKELVSYDIPIKYLRIFHPYQFKLEKVFLRGVNEPLVNSLKPMVVIARVVPNYTEFKARQARRDPASVGLPLTQVSFPISSPMNFDVPRINQNGYPQLSKPGGPPEQPLWNQSFLFQARDGATSFSENTALVLEYYPSASMQSSEPWALNQPLGVSVLPLKSRLYHKMLTGKHLQGLQVERLPIMRPENFLTPNNSKALPTINPKILDENLGAIRESWSMSSLDSAQEVEELQPRDVEMNNYRRAMQKMAEDILALKKQANILEEENGMLRSHLSQQSIEEQSRAEEENLAVSMKQKLLLNELDMKRLRDRVQHLQNELIRKNDREKELLLLYQAQQPQAAQLRRYQDKLQKMKALEDTVRHQEKVIEKMEQILEERLCERKEPIPSNRPQGKPIMASGIPLGPMGETLAVDLYSMLLAENTRLRTELEKNRQQSAPIILQQQALPVDPRELGAGGDLAERLQDTNGPGHPKSTETLPAQVGVPGGYSTAQAAPGAPAVHKPKINIWSSGGMRTQDFLGGTSDKFNLLAKLEQAQSRILSLENQLEESARHWAREKQNLAIRLQEQQHGFGQPPNSIIIDQPNAGASKNPQQLSKLEPSLPSSDKKLNRPSDSQIEISNNQKT.

The disordered stretch occupies residues 228–263 (MSPFSTDSDQEGLSWEAGPWQHPAQVPEEPQGRLDT). A C2 domain is found at 263-398 (TSQDPYPAAN…VFLRGVNEPL (136 aa)). A coiled-coil region spans residues 599–745 (VEMNNYRRAM…LEERLCERKE (147 aa)). Residues 821–842 (AERLQDTNGPGHPKSTETLPAQ) form a disordered region. A coiled-coil region spans residues 885-928 (DKFNLLAKLEQAQSRILSLENQLEESARHWAREKQNLAIRLQEQ). The interval 931-985 (GFGQPPNSIIIDQPNAGASKNPQQLSKLEPSLPSSDKKLNRPSDSQIEISNNQKT) is disordered. Composition is skewed to polar residues over residues 946–956 (AGASKNPQQLS) and 972–985 (PSDS…NQKT).

In Mus musculus (Mouse), this protein is Coiled-coil domain-containing protein 33 (Ccdc33).